Consider the following 81-residue polypeptide: HssA/B-like protein 5 (81 aa).

This sequence belongs to the hssA/B family.

The protein is HssA/B-like protein 5 (hssl5) of Dictyostelium discoideum (Social amoeba).